A 405-amino-acid chain; its full sequence is NADH-quinone oxidoreductase subunit D (405 aa).

It belongs to the complex I 49 kDa subunit family. In terms of assembly, NDH-1 is composed of 14 different subunits. Subunits NuoB, C, D, E, F, and G constitute the peripheral sector of the complex.

It is found in the cell inner membrane. It carries out the reaction a quinone + NADH + 5 H(+)(in) = a quinol + NAD(+) + 4 H(+)(out). In terms of biological role, NDH-1 shuttles electrons from NADH, via FMN and iron-sulfur (Fe-S) centers, to quinones in the respiratory chain. The immediate electron acceptor for the enzyme in this species is believed to be ubiquinone. Couples the redox reaction to proton translocation (for every two electrons transferred, four hydrogen ions are translocated across the cytoplasmic membrane), and thus conserves the redox energy in a proton gradient. This is NADH-quinone oxidoreductase subunit D from Ruegeria pomeroyi (strain ATCC 700808 / DSM 15171 / DSS-3) (Silicibacter pomeroyi).